Reading from the N-terminus, the 518-residue chain is G1/S-specific cyclin-E (518 aa).

Residues 1-193 are disordered; it reads MAGRKSSRTT…DEETEDEFDL (193 aa). Positions 13–46 are enriched in basic and acidic residues; that stretch reads PVKKAERKSAILSPHDELRERLLETSLDVKENIP. Over residues 47–62 the composition is skewed to polar residues; sequence ERSSSTRNESVGSQRS. Residues 82–107 are compositionally biased toward basic and acidic residues; it reads PSTEKKGNGSRDDSFSSVFSEDRETE. Residues 108–119 are compositionally biased toward low complexity; the sequence is SSVGSTSSRTRG. Over residues 135-154 the composition is skewed to basic and acidic residues; that stretch reads SSDHNAESEESRETPQSDEH. The segment covering 155–192 has biased composition (acidic residues); that stretch reads DGFEEDGDVEDDVSSDVNDEEDEYDEYEEDEETEDEFD.

The protein belongs to the cyclin family. Cyclin E subfamily. In terms of assembly, interacts with a member of the CDK2/CDK protein kinases to form a serine/threonine kinase holoenzyme complex. The cyclin subunit imparts substrate specificity to the complex.

Its subcellular location is the nucleus. It localises to the cytoplasm. It is found in the cytoskeleton. The protein resides in the microtubule organizing center. The protein localises to the centrosome. Its subcellular location is the centriole. In terms of biological role, essential for the control of the cell cycle at the G1/S (start) transition. In association with cdk-2, regulates proliferation, quiescent state and cell fate during the development of several cell lineages. In the embryo, initiates the establishment of cell polarity through the recruitment of the centrosomal proteins spd-2 and spd-5 during prophase. During the development of the vulva, controls the onset of vulval cell terminal differentiation by controlling the duration of G1 phase. During hypoderm development at early larval stages, controls syncytial fate of seam cell daughter cells. Involved in the progression of cell division in the intestinal lineage in larvae, and in particular in endoreplication, a specific growth pathway in the intestinal epithelium, required for feeding and gut development in growing larvae. By controlling the activity of translational repressor gld-1, regulates the pool of germline stem cells and the size of the mitotic zone by preventing entry into meiosis. In addition, repression of expression by gld-1 prevents mitosis re-entry in meiotic germline cells. This Caenorhabditis briggsae protein is G1/S-specific cyclin-E (cye-1).